Reading from the N-terminus, the 341-residue chain is Glycerol-3-phosphate dehydrogenase [NAD(P)+] (341 aa).

The NADPH site is built by Ser-11, Trp-12, Arg-32, and Lys-106. Residues Lys-106, Gly-137, and Thr-139 each contribute to the sn-glycerol 3-phosphate site. Ala-141 is a binding site for NADPH. 5 residues coordinate sn-glycerol 3-phosphate: Lys-192, Asp-245, Ser-255, Arg-256, and Asn-257. Lys-192 serves as the catalytic Proton acceptor. An NADPH-binding site is contributed by Arg-256. The NADPH site is built by Val-280 and Glu-282.

The protein belongs to the NAD-dependent glycerol-3-phosphate dehydrogenase family.

It is found in the cytoplasm. It carries out the reaction sn-glycerol 3-phosphate + NAD(+) = dihydroxyacetone phosphate + NADH + H(+). It catalyses the reaction sn-glycerol 3-phosphate + NADP(+) = dihydroxyacetone phosphate + NADPH + H(+). It participates in membrane lipid metabolism; glycerophospholipid metabolism. Its function is as follows. Catalyzes the reduction of the glycolytic intermediate dihydroxyacetone phosphate (DHAP) to sn-glycerol 3-phosphate (G3P), the key precursor for phospholipid synthesis. The polypeptide is Glycerol-3-phosphate dehydrogenase [NAD(P)+] (Exiguobacterium sp. (strain ATCC BAA-1283 / AT1b)).